Consider the following 545-residue polypeptide: Chaperonin GroEL (545 aa).

Residues 30 to 33 (TLGP), lysine 51, 87 to 91 (DGTTT), glycine 415, 479 to 481 (NAA), and aspartate 495 contribute to the ATP site. Residues 526 to 545 (KDDAPAPAMPDMGGMGGMGM) are disordered.

This sequence belongs to the chaperonin (HSP60) family. Forms a cylinder of 14 subunits composed of two heptameric rings stacked back-to-back. Interacts with the co-chaperonin GroES.

It is found in the cytoplasm. It catalyses the reaction ATP + H2O + a folded polypeptide = ADP + phosphate + an unfolded polypeptide.. Functionally, together with its co-chaperonin GroES, plays an essential role in assisting protein folding. The GroEL-GroES system forms a nano-cage that allows encapsulation of the non-native substrate proteins and provides a physical environment optimized to promote and accelerate protein folding. In Paracidovorax citrulli (strain AAC00-1) (Acidovorax citrulli), this protein is Chaperonin GroEL.